The chain runs to 64 residues: VRDGYIAQPENCVYHCIPDCDTLCKDNGGTGGHCGFKLGHGIACWCNALPDNVGIIVDGVKCHK.

Residues Arg2–His63 form the LCN-type CS-alpha/beta domain. Intrachain disulfides connect Cys12–Cys62, Cys16–Cys34, Cys20–Cys44, and Cys24–Cys46. Lys64 is modified (lysine amide).

The protein belongs to the long (4 C-C) scorpion toxin superfamily. Sodium channel inhibitor family. Alpha subfamily. Expressed by the venom gland.

The protein resides in the secreted. Its function is as follows. Alpha toxins bind voltage-independently at site-3 of sodium channels (Nav) and inhibit the inactivation of the activated channels, thereby blocking neuronal transmission. This toxin is highly toxic to insects and mice, and inhibits the binding of alpha-toxin to cockroach neuronal membranes. This chain is Alpha-like toxin Lqh6, found in Leiurus hebraeus (Hebrew deathstalker scorpion).